The following is a 394-amino-acid chain: Chalcone synthase 8 (394 aa).

C165 is a catalytic residue.

It belongs to the thiolase-like superfamily. Chalcone/stilbene synthases family.

The catalysed reaction is (E)-4-coumaroyl-CoA + 3 malonyl-CoA + 3 H(+) = 2',4,4',6'-tetrahydroxychalcone + 3 CO2 + 4 CoA. It functions in the pathway secondary metabolite biosynthesis; flavonoid biosynthesis. The primary product of this enzyme is 4,2',4',6'-tetrahydroxychalcone (also termed naringenin-chalcone or chalcone) which can under specific conditions spontaneously isomerize into naringenin. This Bromheadia finlaysoniana (Orchid) protein is Chalcone synthase 8 (CHS8).